The sequence spans 190 residues: Xanthine phosphoribosyltransferase (190 aa).

Xanthine-binding residues include Leu-20 and Asn-27. Residue 128–132 coordinates 5-phospho-alpha-D-ribose 1-diphosphate; sequence ANGHA. Residue Lys-156 participates in xanthine binding.

The protein belongs to the purine/pyrimidine phosphoribosyltransferase family. Xpt subfamily. In terms of assembly, homodimer.

It localises to the cytoplasm. It carries out the reaction XMP + diphosphate = xanthine + 5-phospho-alpha-D-ribose 1-diphosphate. It functions in the pathway purine metabolism; XMP biosynthesis via salvage pathway; XMP from xanthine: step 1/1. Converts the preformed base xanthine, a product of nucleic acid breakdown, to xanthosine 5'-monophosphate (XMP), so it can be reused for RNA or DNA synthesis. This is Xanthine phosphoribosyltransferase from Pseudomonas aeruginosa (strain ATCC 15692 / DSM 22644 / CIP 104116 / JCM 14847 / LMG 12228 / 1C / PRS 101 / PAO1).